We begin with the raw amino-acid sequence, 205 residues long: LexA repressor (205 aa).

A DNA-binding region (H-T-H motif) is located at residues 28 to 48 (RAEIAASLGFRSPNAAEEHLK). Catalysis depends on for autocatalytic cleavage activity residues S122 and K159.

It belongs to the peptidase S24 family. As to quaternary structure, homodimer.

It catalyses the reaction Hydrolysis of Ala-|-Gly bond in repressor LexA.. Its function is as follows. Represses a number of genes involved in the response to DNA damage (SOS response), including recA and lexA. Binds to the 16 bp palindromic sequence 5'-CTGTATATATATACAG-3'. In the presence of single-stranded DNA, RecA interacts with LexA causing an autocatalytic cleavage which disrupts the DNA-binding part of LexA, leading to derepression of the SOS regulon and eventually DNA repair. The sequence is that of LexA repressor from Providencia rettgeri.